We begin with the raw amino-acid sequence, 278 residues long: Small ribosomal subunit protein uS3 (278 aa).

Positions 39–107 (LRKAISKKYV…KVQLNIVEIS (69 aa)) constitute a KH type-2 domain. Positions 255 to 278 (AEIPAEEKPKRVVKKAENITKEEE) are disordered.

Belongs to the universal ribosomal protein uS3 family. In terms of assembly, part of the 30S ribosomal subunit. Forms a tight complex with proteins S10 and S14.

Its function is as follows. Binds the lower part of the 30S subunit head. Binds mRNA in the 70S ribosome, positioning it for translation. This is Small ribosomal subunit protein uS3 from Dehalococcoides mccartyi (strain ATCC BAA-2100 / JCM 16839 / KCTC 5957 / BAV1).